The chain runs to 269 residues: Kafirin PGK1 (269 aa).

A signal peptide spans 1 to 21 (MATKIFALLALHALLVSGTTA).

The protein belongs to the zein family.

In terms of biological role, major seed storage prolamin. In Sorghum bicolor (Sorghum), this protein is Kafirin PGK1.